The following is a 468-amino-acid chain: 3-isopropylmalate dehydratase large subunit (468 aa).

Positions 347, 407, and 410 each coordinate [4Fe-4S] cluster.

The protein belongs to the aconitase/IPM isomerase family. LeuC type 1 subfamily. Heterodimer of LeuC and LeuD. [4Fe-4S] cluster is required as a cofactor.

The catalysed reaction is (2R,3S)-3-isopropylmalate = (2S)-2-isopropylmalate. It functions in the pathway amino-acid biosynthesis; L-leucine biosynthesis; L-leucine from 3-methyl-2-oxobutanoate: step 2/4. Its function is as follows. Catalyzes the isomerization between 2-isopropylmalate and 3-isopropylmalate, via the formation of 2-isopropylmaleate. This Campylobacter jejuni subsp. jejuni serotype O:6 (strain 81116 / NCTC 11828) protein is 3-isopropylmalate dehydratase large subunit.